Reading from the N-terminus, the 257-residue chain is 3-deoxy-manno-octulosonate cytidylyltransferase (257 aa).

This sequence belongs to the KdsB family.

Its subcellular location is the cytoplasm. The enzyme catalyses 3-deoxy-alpha-D-manno-oct-2-ulosonate + CTP = CMP-3-deoxy-beta-D-manno-octulosonate + diphosphate. It participates in nucleotide-sugar biosynthesis; CMP-3-deoxy-D-manno-octulosonate biosynthesis; CMP-3-deoxy-D-manno-octulosonate from 3-deoxy-D-manno-octulosonate and CTP: step 1/1. It functions in the pathway bacterial outer membrane biogenesis; lipopolysaccharide biosynthesis. Functionally, activates KDO (a required 8-carbon sugar) for incorporation into bacterial lipopolysaccharide in Gram-negative bacteria. The protein is 3-deoxy-manno-octulosonate cytidylyltransferase of Xylella fastidiosa (strain M12).